The primary structure comprises 321 residues: Nucleotide-binding protein LI0459 (321 aa).

41 to 48 (GMSGAGKS) contributes to the ATP binding site.

Belongs to the RapZ-like family.

Displays ATPase and GTPase activities. The protein is Nucleotide-binding protein LI0459 of Lawsonia intracellularis (strain PHE/MN1-00).